The sequence spans 60 residues: Ixodegrin YY-39 (60 aa).

A signal peptide spans 1-21 (MNAALIAALLILGALTLDATA). Positions 49–51 (RGD) match the Cell attachment site motif.

Belongs to the ixodegrin family. Contains 3 disulfide bonds. As to expression, expressed in salivary glands.

Its subcellular location is the secreted. Tick salivary platelet aggregation inhibitor that plays an important part in the anti-hemostatic strategy of ticks. Inhibits platelet aggregation induced by ADP, thrombin and thromboxane A2 (TXA2). Blocks platelet adhesion to soluble collagen (most probably through the binding to alpha-2/beta-1 integrin (ITGA2/ITGB1)) and binds to purified glycoprotein IIb/IIIa (ITGA2B/ITGB3) in a dose-dependent manner. In vivo, reduces thrombus weight effectively in a rat arteriovenous shunt model and inhibits thrombosis in a carrageenan-induced mouse tail thrombosis model. This is Ixodegrin YY-39 from Ixodes scapularis (Black-legged tick).